We begin with the raw amino-acid sequence, 291 residues long: Probable endonuclease 4 (291 aa).

Zn(2+) contacts are provided by histidine 72, histidine 112, glutamate 147, aspartate 181, histidine 184, histidine 215, aspartate 228, histidine 230, and glutamate 260.

This sequence belongs to the AP endonuclease 2 family. Zn(2+) is required as a cofactor.

It catalyses the reaction Endonucleolytic cleavage to 5'-phosphooligonucleotide end-products.. In terms of biological role, endonuclease IV plays a role in DNA repair. It cleaves phosphodiester bonds at apurinic or apyrimidinic (AP) sites, generating a 3'-hydroxyl group and a 5'-terminal sugar phosphate. The protein is Probable endonuclease 4 of Mycoplasma genitalium (strain ATCC 33530 / DSM 19775 / NCTC 10195 / G37) (Mycoplasmoides genitalium).